A 616-amino-acid chain; its full sequence is Chaperone protein HscA (616 aa).

Belongs to the heat shock protein 70 family.

In terms of biological role, chaperone involved in the maturation of iron-sulfur cluster-containing proteins. Has a low intrinsic ATPase activity which is markedly stimulated by HscB. Involved in the maturation of IscU. This Escherichia coli O6:H1 (strain CFT073 / ATCC 700928 / UPEC) protein is Chaperone protein HscA.